A 170-amino-acid chain; its full sequence is Peptide deformylase-like (170 aa).

The active site involves glutamate 139.

It belongs to the polypeptide deformylase family.

The polypeptide is Peptide deformylase-like (Bradyrhizobium diazoefficiens (strain JCM 10833 / BCRC 13528 / IAM 13628 / NBRC 14792 / USDA 110)).